Reading from the N-terminus, the 625-residue chain is Replication protein E1 (625 aa).

A Nuclear localization signal motif is present at residues 83 to 85; that stretch reads KRK. Serine 89, serine 93, and serine 107 each carry phosphoserine; by host. The Nuclear export signal motif lies at 106-115; it reads LSPRLNEISL. Residues 147–169 form a disordered region; it reads GGGGQDVQAGGKENTRPDDGGGD. A DNA-binding region region spans residues 162 to 328; sequence RPDDGGGDAT…QTMFQHGLED (167 aa). The 151-residue stretch at 427–577 folds into the SF3 helicase domain; the sequence is VEFIAFLAAL…FPFDQNGNPV (151 aa). ATP is bound at residue 453 to 460; that stretch reads GPPNTGKS. Lysine 534 is covalently cross-linked (Glycyl lysine isopeptide (Lys-Gly) (interchain with G-Cter in SUMO)).

The protein belongs to the papillomaviridae E1 protein family. In terms of assembly, can form hexamers. Interacts with E2 protein; this interaction increases E1 DNA binding specificity. Interacts with host DNA polymerase subunit POLA2. Interacts with host single stranded DNA-binding protein RPA1. Interacts with host TOP1; this interaction stimulates the enzymatic activity of TOP1. Post-translationally, phosphorylated. Sumoylated.

It is found in the host nucleus. The catalysed reaction is Couples ATP hydrolysis with the unwinding of duplex DNA by translocating in the 3'-5' direction.. It carries out the reaction ATP + H2O = ADP + phosphate + H(+). In terms of biological role, ATP-dependent DNA 3'-5' helicase required for initiation of viral DNA replication. It forms a complex with the viral E2 protein. The E1-E2 complex binds to the replication origin which contains binding sites for both proteins. During the initial step, a dimer of E1 interacts with a dimer of protein E2 leading to a complex that binds the viral origin of replication with high specificity. Then, a second dimer of E1 displaces the E2 dimer in an ATP-dependent manner to form the E1 tetramer. Following this, two E1 monomers are added to each half of the site, which results in the formation of two E1 trimers on the viral ori. Subsequently, two hexamers will be created. The double hexamer acts as a bi-directional helicase machinery and unwinds the viral DNA and then recruits the host DNA polymerase to start replication. This is Replication protein E1 from Macaca mulatta (Rhesus macaque).